A 452-amino-acid chain; its full sequence is Molybdate-anion transporter (452 aa).

Transmembrane regions (helical) follow at residues 1 to 21 (MLLTAYFVLVGLIALWAVLEF), 45 to 65 (YDFYRTYFPALAADWLQGPYL), 79 to 99 (IAIIYVCGFGASVFAGLVSAP), 130 to 150 (FVLITGRVLGGFSSSLLFSSF), 180 to 200 (NGGIAIAAGVIANACAEWLGL), 201 to 221 (GPASPSVLAVPLLVLSVALVI), 251 to 271 (VLLLGTIQALFESVVYIFIFL), 281 to 301 (TPLGIAFSSFMAASAAGSSLY), 316 to 336 (VLCLSILMVFFSLFMLTFSTA), 346 to 366 (LLAFLLIELACGLYFPAMGFL), 377 to 397 (IGVLNWFRVPLNLLAGLGLLV), and 410 to 430 (MFSLCAITMLLALLCVVSLFT).

This sequence belongs to the major facilitator superfamily.

The protein localises to the cell membrane. Its function is as follows. Mediates high-affinity intracellular uptake of the rare oligo-element molybdenum. The polypeptide is Molybdate-anion transporter (mfsd5) (Xenopus tropicalis (Western clawed frog)).